Consider the following 747-residue polypeptide: UPF0313 protein PA4928 (747 aa).

The Radical SAM core domain occupies 371-640; it reads AYEMIRFSVN…KSDQQRRLHK (270 aa). Residues Cys385, Cys389, and Cys392 each coordinate [4Fe-4S] cluster. The interval 670 to 747 is disordered; sequence GKHHLVPTYQ…KKSRQPNIPR (78 aa).

This sequence belongs to the UPF0313 family. The cofactor is [4Fe-4S] cluster.

This chain is UPF0313 protein PA4928, found in Pseudomonas aeruginosa (strain ATCC 15692 / DSM 22644 / CIP 104116 / JCM 14847 / LMG 12228 / 1C / PRS 101 / PAO1).